We begin with the raw amino-acid sequence, 131 residues long: Fluoride-specific ion channel FluC 2 (131 aa).

The next 4 helical transmembrane spans lie at 5–25 (FGVA…SLLV), 39–59 (LATL…TTLA), 70–90 (LAVG…AWES), and 104–124 (LYVL…RALA). Na(+) is bound by residues Gly78 and Thr81.

This sequence belongs to the fluoride channel Fluc/FEX (TC 1.A.43) family.

It is found in the cell membrane. It catalyses the reaction fluoride(in) = fluoride(out). With respect to regulation, na(+) is not transported, but it plays an essential structural role and its presence is essential for fluoride channel function. In terms of biological role, fluoride-specific ion channel. Important for reducing fluoride concentration in the cell, thus reducing its toxicity. This chain is Fluoride-specific ion channel FluC 2, found in Deinococcus geothermalis (strain DSM 11300 / CIP 105573 / AG-3a).